Here is a 348-residue protein sequence, read N- to C-terminus: MSDRLTLLRPDDWHIHLRDGAALPHTVADVARTFGRAIIMPNLVPPVRNAEQADAYRQRILAARPAGSRFEPLMVLYLTDRTQPEEIREAKASGFVHAAKLYPAGATTNSDSGVTSIDKILPAIEAMAEVGMPLLIHGEVTRGDVDVFDREKIFIDEHMRRVVELFPTLKVVFEHITTADAVQFVTEASANVGATITAHHLLYNRNHMLVGGIRPHFYCLPILKRNTHQVALLDAATSGNPKFFLGTDSAPHAQHAKEAACGCAGCYTAFAAIELYAEAFEQRNALDKLEGFASINGPRFYGLPANTDRITLVREDWTAPASLPFGELTVIPLRAGETLRWRLLEESK.

Zn(2+) contacts are provided by His14 and His16. Substrate contacts are provided by residues 16 to 18 (HLR) and Asn42. Residues Lys100, His137, and His175 each contribute to the Zn(2+) site. Lys100 is modified (N6-carboxylysine). Residue His137 coordinates substrate. A substrate-binding site is contributed by Leu220. Asp248 provides a ligand contact to Zn(2+). Residue Asp248 is part of the active site. Positions 252 and 264 each coordinate substrate.

Belongs to the metallo-dependent hydrolases superfamily. DHOase family. Class II DHOase subfamily. Homodimer. Zn(2+) is required as a cofactor.

The enzyme catalyses (S)-dihydroorotate + H2O = N-carbamoyl-L-aspartate + H(+). Its pathway is pyrimidine metabolism; UMP biosynthesis via de novo pathway; (S)-dihydroorotate from bicarbonate: step 3/3. Its function is as follows. Catalyzes the reversible cyclization of carbamoyl aspartate to dihydroorotate. In Pseudomonas fluorescens (strain SBW25), this protein is Dihydroorotase.